The following is a 277-amino-acid chain: Ribosomal protein L11 methyltransferase (277 aa).

S-adenosyl-L-methionine contacts are provided by T130, G151, D172, and N213.

Belongs to the methyltransferase superfamily. PrmA family.

The protein localises to the cytoplasm. The enzyme catalyses L-lysyl-[protein] + 3 S-adenosyl-L-methionine = N(6),N(6),N(6)-trimethyl-L-lysyl-[protein] + 3 S-adenosyl-L-homocysteine + 3 H(+). Methylates ribosomal protein L11. This chain is Ribosomal protein L11 methyltransferase, found in Campylobacter concisus (strain 13826).